A 492-amino-acid chain; its full sequence is Trypanothione reductase (492 aa).

An FAD-binding site is contributed by 35 to 52 (DVQTVHGPPFFAALGGTC). Cys52 and Cys57 form a disulfide bridge. His461 serves as the catalytic Proton acceptor.

The protein belongs to the class-I pyridine nucleotide-disulfide oxidoreductase family. In terms of assembly, homodimer. FAD serves as cofactor.

It is found in the cytoplasm. It catalyses the reaction trypanothione + NADP(+) = trypanothione disulfide + NADPH + H(+). In terms of biological role, trypanothione is the parasite analog of glutathione; this enzyme is the equivalent of glutathione reductase. This is Trypanothione reductase (TPR) from Trypanosoma congolense.